The following is a 229-amino-acid chain: Germin-like protein 12-1 (229 aa).

An N-terminal signal peptide occupies residues 1 to 22 (MASSNFFLPTALIALVATQAMA). Cys-32 and Cys-47 are joined by a disulfide. The Cupin type-1 domain occupies 62–217 (ANLDKPMDTT…AFQVDKKAVD (156 aa)). Asn-78 carries an N-linked (GlcNAc...) asparagine glycan. His-111, His-113, Glu-118, and His-162 together coordinate Mn(2+).

The protein belongs to the germin family. In terms of assembly, oligomer (believed to be a pentamer but probably hexamer).

It localises to the secreted. The protein localises to the extracellular space. Its subcellular location is the apoplast. In terms of biological role, may play a role in plant defense. Probably has no oxalate oxidase activity even if the active site is conserved. This chain is Germin-like protein 12-1, found in Oryza sativa subsp. japonica (Rice).